A 256-amino-acid chain; its full sequence is 5-keto-4-deoxy-D-glucarate aldolase (256 aa).

Histidine 50 functions as the Proton acceptor in the catalytic mechanism. Glutamine 151 provides a ligand contact to substrate. Mg(2+) is bound at residue glutamate 153. Residues serine 178 and aspartate 179 each contribute to the substrate site. Mg(2+) is bound at residue aspartate 179.

The protein belongs to the HpcH/HpaI aldolase family. KDGluc aldolase subfamily. In terms of assembly, homohexamer; trimer of dimers. It depends on Mg(2+) as a cofactor.

The catalysed reaction is 5-dehydro-4-deoxy-D-glucarate = 2-hydroxy-3-oxopropanoate + pyruvate. It carries out the reaction 2-dehydro-3-deoxy-D-glucarate = 2-hydroxy-3-oxopropanoate + pyruvate. The protein operates within carbohydrate acid metabolism; galactarate degradation; D-glycerate from galactarate: step 2/3. In terms of biological role, catalyzes the reversible retro-aldol cleavage of both 5-keto-4-deoxy-D-glucarate and 2-keto-3-deoxy-D-glucarate to pyruvate and tartronic semialdehyde. The protein is 5-keto-4-deoxy-D-glucarate aldolase of Klebsiella pneumoniae subsp. pneumoniae (strain ATCC 700721 / MGH 78578).